The primary structure comprises 277 residues: Thymidylate synthase (277 aa).

A dUMP-binding site is contributed by Arg21. Position 51 (His51) interacts with (6R)-5,10-methylene-5,6,7,8-tetrahydrofolate. 126–127 (RR) contributes to the dUMP binding site. Cys159 functions as the Nucleophile in the catalytic mechanism. DUMP is bound by residues 179–182 (RSGD), Asn190, and 220–222 (HLY). Asp182 contributes to the (6R)-5,10-methylene-5,6,7,8-tetrahydrofolate binding site. (6R)-5,10-methylene-5,6,7,8-tetrahydrofolate is bound at residue Ala276.

This sequence belongs to the thymidylate synthase family. Bacterial-type ThyA subfamily. Homodimer.

It is found in the cytoplasm. The catalysed reaction is dUMP + (6R)-5,10-methylene-5,6,7,8-tetrahydrofolate = 7,8-dihydrofolate + dTMP. It functions in the pathway pyrimidine metabolism; dTTP biosynthesis. Catalyzes the reductive methylation of 2'-deoxyuridine-5'-monophosphate (dUMP) to 2'-deoxythymidine-5'-monophosphate (dTMP) while utilizing 5,10-methylenetetrahydrofolate (mTHF) as the methyl donor and reductant in the reaction, yielding dihydrofolate (DHF) as a by-product. This enzymatic reaction provides an intracellular de novo source of dTMP, an essential precursor for DNA biosynthesis. This chain is Thymidylate synthase, found in Alcanivorax borkumensis (strain ATCC 700651 / DSM 11573 / NCIMB 13689 / SK2).